A 411-amino-acid polypeptide reads, in one-letter code: Lissencephaly-1 homolog (411 aa).

The LisH domain occupies 9-41 (QREELNQAIADYLGSNGYADSLETFRKEADLST). Residues 56-83 (TSVIRLQKKVMELEAKLTEAEKEVIEGA) are a coiled coil. WD repeat units follow at residues 106–147 (GHRA…RSLK), 148–187 (GHTD…ECIK), 191–230 (GHDH…CVKT), 233–272 (GHRE…CKVE), 275–334 (DHEH…CLLT), 337–376 (GHDN…CMKT), and 379–411 (AHQH…WECR).

This sequence belongs to the WD repeat LIS1/nudF family.

It localises to the cytoplasm. It is found in the cytoskeleton. The protein resides in the microtubule organizing center. The protein localises to the centrosome. Positively regulates the activity of the minus-end directed microtubule motor protein dynein. May enhance dynein-mediated microtubule sliding by targeting dynein to the microtubule plus end. Required for several dynein- and microtubule-dependent processes. The polypeptide is Lissencephaly-1 homolog (Drosophila yakuba (Fruit fly)).